A 664-amino-acid chain; its full sequence is Degenerin del-1 (664 aa).

Topologically, residues 1-67 are cytoplasmic; it reads MARKYIDILK…IFTTSLYWVR (67 aa). A helical membrane pass occupies residues 68–88; the sequence is FLWVVVSLVCICLCMYSFSHV. Over 89-607 the chain is Extracellular; that stretch reads KDKYDRKEKI…WFNLMADMGG (519 aa). Asn-241, Asn-300, Asn-394, Asn-508, and Asn-562 each carry an N-linked (GlcNAc...) asparagine glycan. A helical membrane pass occupies residues 608-628; that stretch reads QAGLFLGASIMSVIEFLFFAV. Residues 629 to 664 are Cytoplasmic-facing; sequence RTLGIACKPRRWRQKTELLRAEELNDAEKGVSTNNN.

This sequence belongs to the amiloride-sensitive sodium channel (TC 1.A.6) family.

Its subcellular location is the membrane. In terms of biological role, probable sodium channel subunit. The chain is Degenerin del-1 (del-1) from Caenorhabditis elegans.